We begin with the raw amino-acid sequence, 449 residues long: Tubulin alpha-8 chain (449 aa).

The short motif at 1–4 is the MREC motif element; it reads MREC. GTP-binding residues include glutamine 11, glutamate 71, serine 140, glycine 144, threonine 145, threonine 179, asparagine 206, and asparagine 228. Glutamate 71 lines the Mg(2+) pocket. Glutamate 254 is an active-site residue.

The protein belongs to the tubulin family. As to quaternary structure, dimer of alpha and beta chains. A typical microtubule is a hollow water-filled tube with an outer diameter of 25 nm and an inner diameter of 15 nM. Alpha-beta heterodimers associate head-to-tail to form protofilaments running lengthwise along the microtubule wall with the beta-tubulin subunit facing the microtubule plus end conferring a structural polarity. Microtubules usually have 13 protofilaments but different protofilament numbers can be found in some organisms and specialized cells. Mg(2+) is required as a cofactor. Some glutamate residues at the C-terminus are polyglycylated, resulting in polyglycine chains on the gamma-carboxyl group. Glycylation is mainly limited to tubulin incorporated into axonemes (cilia and flagella) whereas glutamylation is prevalent in neuronal cells, centrioles, axonemes, and the mitotic spindle. Both modifications can coexist on the same protein on adjacent residues, and lowering polyglycylation levels increases polyglutamylation, and reciprocally. Cilia and flagella glycylation is required for their stability and maintenance. Flagella glycylation controls sperm motility. Post-translationally, some glutamate residues at the C-terminus are polyglutamylated, resulting in polyglutamate chains on the gamma-carboxyl group. Polyglutamylation plays a key role in microtubule severing by spastin (SPAST). SPAST preferentially recognizes and acts on microtubules decorated with short polyglutamate tails: severing activity by SPAST increases as the number of glutamates per tubulin rises from one to eight, but decreases beyond this glutamylation threshold. Glutamylation is also involved in cilia motility. In terms of processing, the C-terminal phenylalanine residue is cleaved by MATCAP1/KIAA0895L. In terms of tissue distribution, expressed at highest levels in the testis, followed by skeletal and heart muscle. Expressed at low levels in the developing brain.

The protein localises to the cytoplasm. It localises to the cytoskeleton. It catalyses the reaction GTP + H2O = GDP + phosphate + H(+). Functionally, tubulin is the major constituent of microtubules, a cylinder consisting of laterally associated linear protofilaments composed of alpha- and beta-tubulin heterodimers. Microtubules grow by the addition of GTP-tubulin dimers to the microtubule end, where a stabilizing cap forms. Below the cap, tubulin dimers are in GDP-bound state, owing to GTPase activity of alpha-tubulin. The chain is Tubulin alpha-8 chain (Tuba8) from Mus musculus (Mouse).